A 504-amino-acid chain; its full sequence is MELLNGTGLWPMAIFTVIFILLVDLMHRHQRWTSRYPPGPVPWPVLGNLLQVDPSNMPYSMYKLQHRYGDVFSLQMGWKPMVIVNRLKAVQEVLVTHGEDTADRPPVPIFKCLGVKPRSQGVVFASYGPEWREQRRFSVSTLRTFGMGKKSLEEWVTKEAGHLCDAFTAQNGRSINPKAMLNKALCNVIASLIFARRFEYEDPYLIRMLTLVEESLIEVSGFIPEVLNTFPALLRIPGLADKVFQGQKTFMAFLDNLLAENRTTWDPAQPPRNLTDAFLAEVEKAKGNPESSFNDENLRMVVVDLFTAGMVTTATTLTWALLLMILYPDVQRRVQQEIDEVIGQVRCPEMTDQAHMPYTNAVIHEVQRFGDIAPLNLPRITSCDIEVQDFVIPKGTTLIINLSSVLKDETVWEKPLRFHPEHFLDAQGNFVKHEAFMPFSAGRRACLGEPLARMELFLFFTCLLQHFSFSVPAGQPRPSTLGNFAISVAPLPYQLCAAVREQGH.

Ser-382 carries an O-linked (GlcNAc) serine glycan. Position 446 (Cys-446) interacts with heme.

It belongs to the cytochrome P450 family. Heme is required as a cofactor.

The protein localises to the endoplasmic reticulum membrane. The protein resides in the microsome membrane. The catalysed reaction is an organic molecule + reduced [NADPH--hemoprotein reductase] + O2 = an alcohol + oxidized [NADPH--hemoprotein reductase] + H2O + H(+). Cytochromes P450 are a group of heme-thiolate monooxygenases. In liver microsomes, this enzyme is involved in an NADPH-dependent electron transport pathway. It oxidizes a variety of structurally unrelated compounds, including steroids, fatty acids, and xenobiotics. The protein is Cytochrome P450 2D10 (Cyp2d10) of Rattus norvegicus (Rat).